The primary structure comprises 549 residues: Cytoplasmic trehalase (549 aa).

Substrate-binding positions include Arg-168, 175 to 176 (WD), Asn-212, 221 to 223 (RSQ), 292 to 294 (RDE), and Gly-324. Residues Asp-326 and Glu-509 each act as proton donor/acceptor in the active site. Residue Glu-525 coordinates substrate.

Belongs to the glycosyl hydrolase 37 family. As to quaternary structure, monomer.

The protein resides in the cytoplasm. The enzyme catalyses alpha,alpha-trehalose + H2O = alpha-D-glucose + beta-D-glucose. It functions in the pathway glycan degradation; trehalose degradation; D-glucose from alpha,alpha-trehalose: step 1/1. Hydrolyzes trehalose to glucose. Could be involved, in cells returning to low osmolarity conditions, in the utilization of the accumulated cytoplasmic trehalose, which was synthesized in response to high osmolarity. This chain is Cytoplasmic trehalase, found in Escherichia coli O139:H28 (strain E24377A / ETEC).